Here is an 832-residue protein sequence, read N- to C-terminus: MELRCGGLLFSSRFDSGNLAHVEKVETVPSDGEGVGGAATAPTSGSASSPDYEFNVWTRPDCAETEYENGNRSWFYFSVRGGTPGKLIKINIMNMNKQSKLYSQGMAPFVRTLPSRPRWERIRERPTFEMTETQFVLSFVHRFVEGRGATTFFAFCYPFSYSDCQDLLSQLDQRFPENYSAHSSPLDSIYYHRELLCYSLDGLRVDLLTITSCHGLRDDREPRLEQLFPDVGTPRPFRFTGKRIFFLSSRVHPGETPSSFVFNGFLDFILRPDDPRAQTLRRLFVFKLIPMLNPDGVVRGHYRTDSRGVNLNRQYLKPDAVLHPAIYGAKAVLLYHHVHSRLNSKNPSNQQPSSLHLPPEVPLSDLEKANNLHNELHLGQSPDGENHDRWTETEPTEEKTDPVWIMPQPIPELEEPAPDAIPPKESGVAYYVDLHGHASKRGCFMYGNSFSDESTQVENMLYPKLISLNSAHFDFQGCNFSEKNMYARDRRDGQSKEGSGRVAIYKASGIIHSYTLECNYNTGRSVNSIPAACHDNGRASPPPPPTFPSRYTVELFEQVGRALAIAALDMAECNPWPRIVLSEHSSLTNLRAWMLKHVRNSRGLTSTANVGLNKKRGSRTPPKSNNGLPVSCSENALSRARSFSTGTSTGGSSSQQNSPQMKNSPSFPFHGSRPAGLPGLGSSTQKVSHRVLGPVREPRCPDRRRRQQQQQQQQQQQQQQQQQPLNQRSTTSSLAPSPTLASASPTSSRNMGSCLLPNSLSLSGSSCPFSSSGDKPEAVMVIGKSLLGAGARIPCIRTRLQTCQRRVSARRGPGFPRLGPGWAGAHRRLAEG.

A disordered region spans residues T27–P50. Residues A38–P50 show a composition bias toward low complexity. Positions Y157–A571 constitute a Peptidase M14 domain. Zn(2+) is bound by residues H252 and E255. Low complexity predominate over residues N343–S354. 2 disordered regions span residues N343–P362 and L376–P402. Positions G384–D401 are enriched in basic and acidic residues. H435 is a binding site for Zn(2+). E517 functions as the Proton donor/acceptor in the catalytic mechanism. A disordered region spans residues S606 to G752. The segment covering P621–A636 has biased composition (polar residues). A compositionally biased stretch (low complexity) spans S644 to S654. The segment covering Q655–S666 has biased composition (polar residues). A compositionally biased stretch (low complexity) spans Q708–G752.

This sequence belongs to the peptidase M14 family. Zn(2+) serves as cofactor.

The protein resides in the cytoplasm. The protein localises to the cytosol. It is found in the nucleus. It localises to the cytoskeleton. Its subcellular location is the spindle. The protein resides in the midbody. It carries out the reaction gamma-L-glutamyl-L-glutamyl-[protein] + H2O = L-glutamyl-[protein] + L-glutamate. It catalyses the reaction (L-glutamyl)(n+1)-gamma-L-glutamyl-L-glutamyl-[protein] + H2O = (L-glutamyl)(n)-gamma-L-glutamyl-L-glutamyl-[protein] + L-glutamate. The catalysed reaction is C-terminal L-alpha-aminoacyl-L-glutamyl-[tubulin] + H2O = C-terminal L-alpha-aminoacyl-[tubulin] + L-glutamate. The enzyme catalyses C-terminal L-alpha-aminoacyl-L-glutamyl-L-glutamyl-[tubulin] + H2O = C-terminal L-alpha-aminoacyl-L-glutamyl-[tubulin] + L-glutamate. Functionally, metallocarboxypeptidase that mediates deglutamylation of tubulin and non-tubulin target proteins. Catalyzes the removal of polyglutamate side chains present on the gamma-carboxyl group of glutamate residues within the C-terminal tail of alpha- and beta-tubulin. Cleaves alpha- and gamma-linked polyglutamate tubulin side-chain, as well as the branching point glutamate. Also catalyzes the removal of alpha-linked glutamate residues from the carboxy-terminus of alpha-tubulin. Mediates deglutamylation of nucleotidyltransferase CGAS, leading to CGAS antiviral defense response activation. This Rattus norvegicus (Rat) protein is Cytosolic carboxypeptidase-like protein 5 (Agbl5).